The primary structure comprises 553 residues: Arginine--tRNA ligase (553 aa).

The 'HIGH' region motif lies at 130–140 (ANPTGDLHIGH).

Belongs to the class-I aminoacyl-tRNA synthetase family. As to quaternary structure, monomer.

Its subcellular location is the cytoplasm. It carries out the reaction tRNA(Arg) + L-arginine + ATP = L-arginyl-tRNA(Arg) + AMP + diphosphate. In Staphylococcus aureus (strain bovine RF122 / ET3-1), this protein is Arginine--tRNA ligase.